A 310-amino-acid chain; its full sequence is Eukaryotic translation initiation factor 3 subunit G (310 aa).

2 disordered regions span residues 1-32 and 179-229; these read MPTE…PVTK and TGDK…DDNA. A compositionally biased stretch (low complexity) spans 187 to 196; that stretch reads GAEPEPAQAP. Residues 211 to 229 show a composition bias toward basic and acidic residues; the sequence is GGSRRGESMQPNRRADDNA. Residues 229-307 enclose the RRM domain; sequence ATIRVTNLSE…LILNVEWAKP (79 aa).

The protein belongs to the eIF-3 subunit G family. In terms of assembly, component of the eukaryotic translation initiation factor 3 (eIF-3) complex, which is composed of 13 subunits: eif3a, eif3b, eif3c, eif3d, eif3e, eif3f, eif3g, eif3h, eif3i, eif3j, eif3k, eif3l and eif3m.

Its subcellular location is the cytoplasm. Functionally, RNA-binding component of the eukaryotic translation initiation factor 3 (eIF-3) complex, which is involved in protein synthesis of a specialized repertoire of mRNAs and, together with other initiation factors, stimulates binding of mRNA and methionyl-tRNAi to the 40S ribosome. The eIF-3 complex specifically targets and initiates translation of a subset of mRNAs involved in cell proliferation. This subunit can bind 18S rRNA. This is Eukaryotic translation initiation factor 3 subunit G (eif3g) from Xenopus tropicalis (Western clawed frog).